We begin with the raw amino-acid sequence, 370 residues long: Chloromuconate cycloisomerase (370 aa).

Catalysis depends on Lys-165, which acts as the Proton acceptor. Asp-194, Glu-220, and Asp-245 together coordinate Mn(2+). The active-site Proton donor is Glu-323.

Belongs to the mandelate racemase/muconate lactonizing enzyme family. The cofactor is Mn(2+).

The catalysed reaction is 2-[(2R)-2-chloro-2,5-dihydro-5-oxofuryl]acetate = 3-chloro-cis,cis-muconate + H(+). Its pathway is aromatic compound metabolism; 3-chlorocatechol degradation. In Cupriavidus pinatubonensis (strain JMP 134 / LMG 1197) (Cupriavidus necator (strain JMP 134)), this protein is Chloromuconate cycloisomerase (tfdDI).